A 488-amino-acid polypeptide reads, in one-letter code: Ribulose bisphosphate carboxylase large chain (488 aa).

Asn-128 and Thr-178 together coordinate substrate. Lys-180 serves as the catalytic Proton acceptor. Lys-182 contributes to the substrate binding site. The Mg(2+) site is built by Lys-206, Asp-208, and Glu-209. An N6-carboxylysine modification is found at Lys-206. The active-site Proton acceptor is the His-298. Substrate-binding residues include Arg-299, His-331, and Ser-383.

This sequence belongs to the RuBisCO large chain family. Type I subfamily. As to quaternary structure, heterohexadecamer of 8 large chains and 8 small chains. It depends on Mg(2+) as a cofactor.

The enzyme catalyses 2 (2R)-3-phosphoglycerate + 2 H(+) = D-ribulose 1,5-bisphosphate + CO2 + H2O. The catalysed reaction is D-ribulose 1,5-bisphosphate + O2 = 2-phosphoglycolate + (2R)-3-phosphoglycerate + 2 H(+). In terms of biological role, ruBisCO catalyzes two reactions: the carboxylation of D-ribulose 1,5-bisphosphate, the primary event in carbon dioxide fixation, as well as the oxidative fragmentation of the pentose substrate. Both reactions occur simultaneously and in competition at the same active site. The polypeptide is Ribulose bisphosphate carboxylase large chain (Xanthobacter flavus).